A 74-amino-acid polypeptide reads, in one-letter code: Mu-Sparatoxin-Hp2 (74 aa).

The first 20 residues, 1-20, serve as a signal peptide directing secretion; it reads MKIIVLMMMLFAAFSAVVLA. A propeptide spanning residues 21 to 35 is cleaved from the precursor; the sequence is DKSIEDAALDTVMDR. 3 disulfide bridges follow: Cys-42-Cys-57, Cys-49-Cys-62, and Cys-56-Cys-66. Residue Leu-73 is modified to Leucine amide.

In terms of tissue distribution, expressed by the venom gland.

The protein localises to the secreted. Its function is as follows. Weakly nhibits voltage-gated sodium channels Nav1.7/SCN9A. High concentration of the toxin (3 uM) inhibits Nav1.7/SCN9A currents by 80%. In Heteropoda pingtungensis (Pingtung huntsman spider), this protein is Mu-Sparatoxin-Hp2.